The sequence spans 439 residues: ATP-dependent RNA helicase RhlB (439 aa).

The Q motif motif lies at 9–37 (QKFADLPLCDEVKQALNENGFEHCTPIQA). A Helicase ATP-binding domain is found at 40-219 (LPVLLEKKDI…YDHMNDPVKV (180 aa)). Residue 53 to 60 (AQTGTGKT) coordinates ATP. Residues 165-168 (DEAD) carry the DEAD box motif. Residues 243–390 (KLKLLHSLIE…VTSYDRDALI (148 aa)) enclose the Helicase C-terminal domain. The segment at 394-439 (PPVKIHRKPHAGGRNLRDRNGSPRPSGSHRSGSGRPPRHDRTRRHS) is disordered. Residues 415–428 (SPRPSGSHRSGSGR) show a composition bias toward low complexity. Basic residues predominate over residues 429-439 (PPRHDRTRRHS).

Belongs to the DEAD box helicase family. RhlB subfamily. Component of the RNA degradosome, which is a multiprotein complex involved in RNA processing and mRNA degradation.

It localises to the cytoplasm. It catalyses the reaction ATP + H2O = ADP + phosphate + H(+). DEAD-box RNA helicase involved in RNA degradation. Has RNA-dependent ATPase activity and unwinds double-stranded RNA. The polypeptide is ATP-dependent RNA helicase RhlB (Shewanella amazonensis (strain ATCC BAA-1098 / SB2B)).